A 507-amino-acid chain; its full sequence is ATP synthase subunit alpha, chloroplastic (507 aa).

170 to 177 serves as a coordination point for ATP; sequence GDRQTGKT.

It belongs to the ATPase alpha/beta chains family. In terms of assembly, F-type ATPases have 2 components, CF(1) - the catalytic core - and CF(0) - the membrane proton channel. CF(1) has five subunits: alpha(3), beta(3), gamma(1), delta(1), epsilon(1). CF(0) has four main subunits: a, b, b' and c.

Its subcellular location is the plastid. It is found in the chloroplast thylakoid membrane. It catalyses the reaction ATP + H2O + 4 H(+)(in) = ADP + phosphate + 5 H(+)(out). Functionally, produces ATP from ADP in the presence of a proton gradient across the membrane. The alpha chain is a regulatory subunit. The sequence is that of ATP synthase subunit alpha, chloroplastic from Nymphaea alba (White water-lily).